Reading from the N-terminus, the 383-residue chain is MNELEFVTLHRRHLHQYPELSLHEFETTSYITSFLEDLGVPYDRPLKTGVIAYLEGNSHHTIAFRADIDALPIYEENDIDFKSKNDHVMHACGHDGHTTALMLFVKRCKALYDKSELPHNVVFIFQPAEETGGGANRLIKAGAFDKYPIEAVFGFHVNPFEKEGKIVIRDEEITASATEYRFFLKGLSSHVADKEQGHSCGEGLQHVLSQIGQIQQFHLNGLKRNIIHMGHFEAGEAINTVPSHGYLEGTIRTYDTEDLAIVKHQMHKIAESVQLLFNVECEVKFEEGYPPTMNHPQLRQAVENAIEGANLEVVEKKLPFLFGEDFSFYGQQLAPSYFVFVGTQNKEKGFVTGLHTAHLNFDEKILIDVVNYYEHLLRNYKEV.

It belongs to the peptidase M20 family.

This is an uncharacterized protein from Staphylococcus epidermidis (strain ATCC 35984 / DSM 28319 / BCRC 17069 / CCUG 31568 / BM 3577 / RP62A).